The chain runs to 82 residues: Large ribosomal subunit protein bL31B (82 aa).

This sequence belongs to the bacterial ribosomal protein bL31 family. Type B subfamily. As to quaternary structure, part of the 50S ribosomal subunit.

This Acinetobacter baylyi (strain ATCC 33305 / BD413 / ADP1) protein is Large ribosomal subunit protein bL31B.